The chain runs to 645 residues: uncharacterized protein (645 aa).

Belongs to the mycobacterial PPE family.

This is an uncharacterized protein from Mycobacterium tuberculosis (strain CDC 1551 / Oshkosh).